The sequence spans 126 residues: Large ribosomal subunit protein bL12 (126 aa).

It belongs to the bacterial ribosomal protein bL12 family. As to quaternary structure, homodimer. Part of the ribosomal stalk of the 50S ribosomal subunit. Forms a multimeric L10(L12)X complex, where L10 forms an elongated spine to which 2 to 4 L12 dimers bind in a sequential fashion. Binds GTP-bound translation factors.

Its function is as follows. Forms part of the ribosomal stalk which helps the ribosome interact with GTP-bound translation factors. Is thus essential for accurate translation. This is Large ribosomal subunit protein bL12 from Streptococcus pyogenes serotype M28 (strain MGAS6180).